The primary structure comprises 445 residues: Coronin-A (445 aa).

4 WD repeats span residues 77–117, 127–167, 170–209, and 259–299; these read GHKS…LTDS, GHKR…NLTT, GHSDMITSCEWNHNGSQIVTTCKDKKARVFDPRTNSIVNE, and DSAS…PYIH. Residues 410–444 are a coiled coil; sequence KNEKELREEYEKLKIRVAYLESEIVKKDAKIKELT.

The protein belongs to the WD repeat coronin family. As to quaternary structure, binds to F-actin.

The protein localises to the cell surface. Its function is as follows. Required for normal motility. Participates in cytokinesis. This chain is Coronin-A (corA), found in Dictyostelium discoideum (Social amoeba).